Here is a 226-residue protein sequence, read N- to C-terminus: Late protein I226R (226 aa).

The N-terminal stretch at 1–16 (MKMETFLVCLFHNADG) is a signal peptide. 2 N-linked (GlcNAc...) asparagine; by host glycosylation sites follow: Asn-142 and Asn-164.

The protein belongs to the asfivirus I226R family.

Plays a role in the inhibition of host NF-kappa-B and IRF3 signaling pathways. Mechanistically, promotes the degradation of host IKBKG through enhancing its ubiquitination leading to inhibition of both pathways. This is Late protein I226R from African swine fever virus (isolate Tick/South Africa/Pretoriuskop Pr4/1996) (ASFV).